Consider the following 166-residue polypeptide: Small ribosomal subunit protein uS5 (166 aa).

In terms of domain architecture, S5 DRBM spans 11–74; that stretch reads LIDKVVHISR…ESAKRTMFEV (64 aa).

It belongs to the universal ribosomal protein uS5 family. Part of the 30S ribosomal subunit. Contacts proteins S4 and S8.

With S4 and S12 plays an important role in translational accuracy. Functionally, located at the back of the 30S subunit body where it stabilizes the conformation of the head with respect to the body. The chain is Small ribosomal subunit protein uS5 from Syntrophobacter fumaroxidans (strain DSM 10017 / MPOB).